The primary structure comprises 371 residues: Aminomethyltransferase (371 aa).

It belongs to the GcvT family. As to quaternary structure, the glycine cleavage system is composed of four proteins: P, T, L and H.

It carries out the reaction N(6)-[(R)-S(8)-aminomethyldihydrolipoyl]-L-lysyl-[protein] + (6S)-5,6,7,8-tetrahydrofolate = N(6)-[(R)-dihydrolipoyl]-L-lysyl-[protein] + (6R)-5,10-methylene-5,6,7,8-tetrahydrofolate + NH4(+). The glycine cleavage system catalyzes the degradation of glycine. The protein is Aminomethyltransferase of Nitrosococcus oceani (strain ATCC 19707 / BCRC 17464 / JCM 30415 / NCIMB 11848 / C-107).